A 734-amino-acid polypeptide reads, in one-letter code: Photosystem I P700 chlorophyll a apoprotein A2 (734 aa).

Transmembrane regions (helical) follow at residues 46–69 (IFASHFGQLAIIFLWTSGNLFHVA), 135–158 (LYIGALFLLITASMTLFAGWLHLQ), 175–199 (LNHHLSGLFGVSSLAWTGHLIHVAI), 273–291 (IAHHHLAIAVLFIVAGHMY), 330–353 (LHFQLGLALASLGVITSVVAQHMY), 369–395 (AALYTHHQYIAGFIMTGAFAHGAIFFI), 417–439 (AIISHLSWASLFLGFHTLGLYVH), and 517–535 (FLVHHAIALGLHTTTLILV). [4Fe-4S] cluster-binding residues include cysteine 559 and cysteine 568. 2 consecutive transmembrane segments (helical) span residues 575–596 (AFYLAVFWMLNTIGWVTFYWHW) and 643–665 (LSVWAWMFLFGHLIWATGFMFLI). Positions 654, 662, and 670 each coordinate chlorophyll a. Phylloquinone is bound at residue tryptophan 671. Residues 707-727 (VVGLAHFSVGYVFTYAAFLIA) traverse the membrane as a helical segment.

This sequence belongs to the PsaA/PsaB family. As to quaternary structure, the PsaA/B heterodimer binds the P700 chlorophyll special pair and subsequent electron acceptors. PSI consists of a core antenna complex that captures photons, and an electron transfer chain that converts photonic excitation into a charge separation. The eukaryotic PSI reaction center is composed of at least 11 subunits. P700 is a chlorophyll a/chlorophyll a' dimer, A0 is one or more chlorophyll a, A1 is one or both phylloquinones and FX is a shared 4Fe-4S iron-sulfur center. is required as a cofactor.

It is found in the plastid. The protein resides in the chloroplast thylakoid membrane. The catalysed reaction is reduced [plastocyanin] + hnu + oxidized [2Fe-2S]-[ferredoxin] = oxidized [plastocyanin] + reduced [2Fe-2S]-[ferredoxin]. In terms of biological role, psaA and PsaB bind P700, the primary electron donor of photosystem I (PSI), as well as the electron acceptors A0, A1 and FX. PSI is a plastocyanin-ferredoxin oxidoreductase, converting photonic excitation into a charge separation, which transfers an electron from the donor P700 chlorophyll pair to the spectroscopically characterized acceptors A0, A1, FX, FA and FB in turn. Oxidized P700 is reduced on the lumenal side of the thylakoid membrane by plastocyanin. This Mesostigma viride (Green alga) protein is Photosystem I P700 chlorophyll a apoprotein A2.